Reading from the N-terminus, the 425-residue chain is MTNKEAFELAKKYMPGGVSSPVRAFKSVGAEPIVVNRGFGAFVEDIEGKKYIDYMLSFGPLILGHRSEIVVSKIMEALDKGNSFGITNMYEIELSELIIKASKVIDKVRFVSSGTEAVMSAIRLARGITNKPYIIKFDGCYHGFSDSVLVGAGSGVATLGIPGTPGIPKEFAALTIVLDYNDENALEEAFIKYKNQIAAVLVEPVAGNMGVVLPKESWLKKLRDITKENDALLIFDEVITGFRLALGGAAEYFGIEPDIVCYGKIIGGGMPIGAYGAKNHIMERVAPEGPIYQAGTLSGNPISVASGLAILKTLIKDIAIYDRLSELRAYLTYTLSKMLSEKGIPHRINEIASMFTIFFTDKDVIDFKSAKTSDTALFGKFFRNALKEGVLMPPSQFEAWFLSTAHTKDVVDTTLEKLKKAIDLL.

At Lys-264 the chain carries N6-(pyridoxal phosphate)lysine.

This sequence belongs to the class-III pyridoxal-phosphate-dependent aminotransferase family. HemL subfamily. Homodimer. The cofactor is pyridoxal 5'-phosphate.

The protein resides in the cytoplasm. It catalyses the reaction (S)-4-amino-5-oxopentanoate = 5-aminolevulinate. Its pathway is porphyrin-containing compound metabolism; protoporphyrin-IX biosynthesis; 5-aminolevulinate from L-glutamyl-tRNA(Glu): step 2/2. This is Glutamate-1-semialdehyde 2,1-aminomutase from Hydrogenobaculum sp. (strain Y04AAS1).